The sequence spans 419 residues: DNA-directed RNA polymerase I subunit RPA49 (419 aa).

2 positions are modified to phosphoserine: Ser-35 and Ser-163. Lys-373 carries the post-translational modification N6-acetyllysine. Residues 397 to 419 (GTLSLPLPPAQTSDRLAKRRKIT) form a disordered region.

Belongs to the eukaryotic RPA49/POLR1E RNA polymerase subunit family. As to quaternary structure, component of the RNA polymerase I (Pol I) complex consisting of 13 subunits: a ten-subunit catalytic core composed of POLR1A/RPA1, POLR1B/RPA2, POLR1C/RPAC1, POLR1D/RPAC2, POLR1H/RPA12, POLR2E/RPABC1, POLR2F/RPABC2, POLR2H/RPABC3, POLR2K/RPABC4 and POLR2L/RPABC5; a mobile stalk subunit POLR1F/RPA43 protruding from the core and additional subunits homologous to general transcription factors POLR1E/RPA49 and POLR1G/RPA34. Forms a heterodimer with POLR1G/RPA34. Interacts with POLR1G. Also binds UBTF/UBF. Interacts with PWP1. Acetylated at Lys-373 by CREBBP/CBP, leading to decreased RNA polymerase I transcription. In normal conditions, deacetylated by SIRT7, promoting the association of RNA polymerase I with the rDNA promoter region and coding region. In response to stress, SIRT7 is released from nucleoli leading to hyperacetylation of POLR1E/PAF53 and decreased association of RNA polymerase I with the rDNA promoter region.

It is found in the nucleus. It localises to the nucleolus. In terms of biological role, component of RNA polymerase I (Pol I), a DNA-dependent RNA polymerase which synthesizes ribosomal RNA precursors using the four ribonucleoside triphosphates as substrates. Appears to be involved in the formation of the initiation complex at the promoter by mediating the interaction between Pol I and UBTF/UBF. The chain is DNA-directed RNA polymerase I subunit RPA49 (POLR1E) from Homo sapiens (Human).